The following is a 519-amino-acid chain: Acetylcholine receptor subunit gamma (519 aa).

Residues 1-22 (MQGGQRPHLLLLLLAVCLGAQS) form the signal peptide. The Extracellular portion of the chain corresponds to 23-240 (RNQEERLLAD…VVFYLLIQRK (218 aa)). 2 N-linked (GlcNAc...) asparagine glycosylation sites follow: Asn-52 and Asn-163. Cysteines 150 and 164 form a disulfide. 3 consecutive transmembrane segments (helical) span residues 241–265 (PLFY…IYFL), 274–292 (CTVA…FLVA), and 308–329 (YLTF…VLNV). Residues 330–476 (SLRSPHTHSM…WLLVGRVLDR (147 aa)) lie on the Cytoplasmic side of the membrane. A helical transmembrane segment spans residues 477-497 (VCFLAMLSLFICGTAGIFLMA).

The protein belongs to the ligand-gated ion channel (TC 1.A.9) family. Acetylcholine receptor (TC 1.A.9.1) subfamily. Gamma/CHRNG sub-subfamily. Pentamer of two alpha chains, and one each of the beta, delta, and gamma (in immature muscle) or epsilon (in mature muscle) chains. As to expression, at least in myotubes of skeletal muscle.

The protein resides in the postsynaptic cell membrane. Its subcellular location is the cell membrane. It carries out the reaction K(+)(in) = K(+)(out). The enzyme catalyses Na(+)(in) = Na(+)(out). Functionally, after binding acetylcholine, the AChR responds by an extensive change in conformation that affects all subunits and leads to opening of an ion-conducting channel across the plasma membrane. The sequence is that of Acetylcholine receptor subunit gamma (Chrng) from Mus musculus (Mouse).